We begin with the raw amino-acid sequence, 270 residues long: UPF0354 protein BA_4944/GBAA_4944/BAS4588 (270 aa).

This sequence belongs to the UPF0354 family.

In Bacillus anthracis, this protein is UPF0354 protein BA_4944/GBAA_4944/BAS4588.